The primary structure comprises 112 residues: Transmembrane protein 14 homolog (112 aa).

The next 4 membrane-spanning stretches (helical) occupy residues 9 to 26 (FKLNAAMAAIVLSGGVIG), 36 to 53 (LIAGSVFGLLYSTSAYYL), 60 to 77 (VGLGVSVLASSLLGGVMG), and 87 to 109 (IPIILATGSAFTLLSSGKELYNI).

The protein belongs to the TMEM14 family.

Its subcellular location is the membrane. In Dictyostelium discoideum (Social amoeba), this protein is Transmembrane protein 14 homolog.